The chain runs to 313 residues: Ribosomal RNA small subunit methyltransferase H (313 aa).

Residues 35–37, aspartate 55, phenylalanine 79, aspartate 101, and glutamine 108 contribute to the S-adenosyl-L-methionine site; that span reads GGH.

The protein belongs to the methyltransferase superfamily. RsmH family.

It localises to the cytoplasm. The catalysed reaction is cytidine(1402) in 16S rRNA + S-adenosyl-L-methionine = N(4)-methylcytidine(1402) in 16S rRNA + S-adenosyl-L-homocysteine + H(+). Its function is as follows. Specifically methylates the N4 position of cytidine in position 1402 (C1402) of 16S rRNA. This is Ribosomal RNA small subunit methyltransferase H from Salmonella agona (strain SL483).